Consider the following 93-residue polypeptide: NADH-ubiquinone oxidoreductase chain 4L (93 aa).

Transmembrane regions (helical) follow at residues 1–21 (MVWM…VIFR), 29–49 (LFVG…VFLM), and 54–74 (LILL…ALLV).

This sequence belongs to the complex I subunit 4L family.

It localises to the mitochondrion membrane. The enzyme catalyses a ubiquinone + NADH + 5 H(+)(in) = a ubiquinol + NAD(+) + 4 H(+)(out). Core subunit of the mitochondrial membrane respiratory chain NADH dehydrogenase (Complex I) that is believed to belong to the minimal assembly required for catalysis. Complex I functions in the transfer of electrons from NADH to the respiratory chain. The immediate electron acceptor for the enzyme is believed to be ubiquinone. The sequence is that of NADH-ubiquinone oxidoreductase chain 4L (ND4L) from Mytilus edulis (Blue mussel).